We begin with the raw amino-acid sequence, 248 residues long: 2,3-bisphosphoglycerate-dependent phosphoglycerate mutase (248 aa).

Substrate contacts are provided by residues 8–15, 21–22, Arg60, 87–90, Lys98, 114–115, and 183–184; these read RHGESTWN, TG, ERHY, RR, and GN. Catalysis depends on His9, which acts as the Tele-phosphohistidine intermediate. Glu87 (proton donor/acceptor) is an active-site residue.

It belongs to the phosphoglycerate mutase family. BPG-dependent PGAM subfamily. In terms of assembly, homodimer.

The catalysed reaction is (2R)-2-phosphoglycerate = (2R)-3-phosphoglycerate. It participates in carbohydrate degradation; glycolysis; pyruvate from D-glyceraldehyde 3-phosphate: step 3/5. In terms of biological role, catalyzes the interconversion of 2-phosphoglycerate and 3-phosphoglycerate. The protein is 2,3-bisphosphoglycerate-dependent phosphoglycerate mutase of Burkholderia ambifaria (strain ATCC BAA-244 / DSM 16087 / CCUG 44356 / LMG 19182 / AMMD) (Burkholderia cepacia (strain AMMD)).